Reading from the N-terminus, the 140-residue chain is Small ribosomal subunit protein uS19 (140 aa).

It belongs to the universal ribosomal protein uS19 family.

Protein S19 forms a complex with S13 that binds strongly to the 16S ribosomal RNA. The chain is Small ribosomal subunit protein uS19 from Metallosphaera sedula (strain ATCC 51363 / DSM 5348 / JCM 9185 / NBRC 15509 / TH2).